Reading from the N-terminus, the 151-residue chain is UPF0756 membrane protein Dred_1676 (151 aa).

Helical transmembrane passes span 9–29 (VILL…CASV), 47–67 (THGL…PIAT), 75–95 (LLYN…ILAT), and 111–131 (IIFG…GQPV).

It belongs to the UPF0756 family.

It is found in the cell membrane. This is UPF0756 membrane protein Dred_1676 from Desulforamulus reducens (strain ATCC BAA-1160 / DSM 100696 / MI-1) (Desulfotomaculum reducens).